Consider the following 240-residue polypeptide: uncharacterized protein (240 aa).

Residues 1 to 27 (MKDLQKKSSVRRQITNEDDERYGEDSI) form a disordered region. Phosphoserine is present on residues Ser59 and Ser95. A disordered region spans residues 189–227 (RTPSPTGKSVGDEATSNNMHSSSAIRNPNGPTVDPEEGK). Residues 202–218 (ATSNNMHSSSAIRNPNG) are compositionally biased toward polar residues.

This is an uncharacterized protein from Saccharomyces cerevisiae (strain ATCC 204508 / S288c) (Baker's yeast).